The primary structure comprises 61 residues: Large ribosomal subunit protein eL37 (61 aa).

Zn(2+)-binding residues include cysteine 20, cysteine 23, cysteine 35, and cysteine 38. A C4-type zinc finger spans residues 20 to 38 (CRRCGRRAYHVRKKRCAAC).

It belongs to the eukaryotic ribosomal protein eL37 family. It depends on Zn(2+) as a cofactor.

Functionally, binds to the 23S rRNA. This is Large ribosomal subunit protein eL37 (rpl37e) from Methanocaldococcus jannaschii (strain ATCC 43067 / DSM 2661 / JAL-1 / JCM 10045 / NBRC 100440) (Methanococcus jannaschii).